The chain runs to 51 residues: Perinerin (51 aa).

Functionally, antibacterial activity against both Gram-negative and Gram-positive bacteria. Shows marked activity against P.aeruginosa, B.megaterium, A.viridans, moderate activity against E.coli K-12, S.aureus and M.luteus, and minor activity against P.vulgaris. Antifungal activity against P.heliothis. In Perinereis aibuhitensis (Korean lugworm), this protein is Perinerin.